The primary structure comprises 235 residues: tRNA pseudouridine synthase B (235 aa).

The active-site Nucleophile is D48.

The protein belongs to the pseudouridine synthase TruB family. Type 1 subfamily.

The enzyme catalyses uridine(55) in tRNA = pseudouridine(55) in tRNA. Its function is as follows. Responsible for synthesis of pseudouridine from uracil-55 in the psi GC loop of transfer RNAs. The chain is tRNA pseudouridine synthase B from Phocaeicola vulgatus (strain ATCC 8482 / DSM 1447 / JCM 5826 / CCUG 4940 / NBRC 14291 / NCTC 11154) (Bacteroides vulgatus).